The sequence spans 92 residues: Small ribosomal subunit protein uS19 (92 aa).

This sequence belongs to the universal ribosomal protein uS19 family.

Its function is as follows. Protein S19 forms a complex with S13 that binds strongly to the 16S ribosomal RNA. The protein is Small ribosomal subunit protein uS19 of Corynebacterium kroppenstedtii (strain DSM 44385 / JCM 11950 / CIP 105744 / CCUG 35717).